The following is a 307-amino-acid chain: Acyl transferase (307 aa).

Catalysis depends on charge relay system residues Ser116, Asp213, and His243.

This sequence belongs to the LuxD family.

The protein operates within lipid metabolism; fatty acid reduction for biolumincescence. In terms of biological role, acyl transferase is part of the fatty acid reductase system required for aldehyde biosynthesis; it produces fatty acids for the luminescent reaction. The polypeptide is Acyl transferase (Photorhabdus luminescens (Xenorhabdus luminescens)).